A 197-amino-acid polypeptide reads, in one-letter code: Recombination protein RecR (197 aa).

The C4-type zinc finger occupies 56–71 (CERCNTFTETEICQRC). Residues 79-174 (SLLCVVEMPA…RVSRLSRGVP (96 aa)) enclose the Toprim domain.

Belongs to the RecR family.

May play a role in DNA repair. It seems to be involved in an RecBC-independent recombinational process of DNA repair. It may act with RecF and RecO. This chain is Recombination protein RecR, found in Aromatoleum aromaticum (strain DSM 19018 / LMG 30748 / EbN1) (Azoarcus sp. (strain EbN1)).